The following is a 257-amino-acid chain: Deoxyribose-phosphate aldolase (257 aa).

Residue Asp-102 is the Proton donor/acceptor of the active site. The Schiff-base intermediate with acetaldehyde role is filled by Lys-166. Catalysis depends on Lys-198, which acts as the Proton donor/acceptor.

The protein belongs to the DeoC/FbaB aldolase family. DeoC type 2 subfamily.

The protein localises to the cytoplasm. The enzyme catalyses 2-deoxy-D-ribose 5-phosphate = D-glyceraldehyde 3-phosphate + acetaldehyde. The protein operates within carbohydrate degradation; 2-deoxy-D-ribose 1-phosphate degradation; D-glyceraldehyde 3-phosphate and acetaldehyde from 2-deoxy-alpha-D-ribose 1-phosphate: step 2/2. Catalyzes a reversible aldol reaction between acetaldehyde and D-glyceraldehyde 3-phosphate to generate 2-deoxy-D-ribose 5-phosphate. The protein is Deoxyribose-phosphate aldolase of Shewanella piezotolerans (strain WP3 / JCM 13877).